We begin with the raw amino-acid sequence, 397 residues long: Tryptophan synthase beta chain (397 aa).

The residue at position 91 (Lys91) is an N6-(pyridoxal phosphate)lysine.

This sequence belongs to the TrpB family. Tetramer of two alpha and two beta chains. The cofactor is pyridoxal 5'-phosphate.

The enzyme catalyses (1S,2R)-1-C-(indol-3-yl)glycerol 3-phosphate + L-serine = D-glyceraldehyde 3-phosphate + L-tryptophan + H2O. The protein operates within amino-acid biosynthesis; L-tryptophan biosynthesis; L-tryptophan from chorismate: step 5/5. Functionally, the beta subunit is responsible for the synthesis of L-tryptophan from indole and L-serine. This is Tryptophan synthase beta chain from Bacillus anthracis (strain A0248).